The following is a 156-amino-acid chain: Small ribosomal subunit protein uS7 (156 aa).

The protein belongs to the universal ribosomal protein uS7 family. In terms of assembly, part of the 30S ribosomal subunit. Contacts proteins S9 and S11.

One of the primary rRNA binding proteins, it binds directly to 16S rRNA where it nucleates assembly of the head domain of the 30S subunit. Is located at the subunit interface close to the decoding center, probably blocks exit of the E-site tRNA. This chain is Small ribosomal subunit protein uS7, found in Mycoplasmopsis synoviae (strain 53) (Mycoplasma synoviae).